The sequence spans 20 residues: Transcriptional regulatory protein PufK (20 aa).

Residues 1-11 are compositionally biased toward basic residues; that stretch reads MVPYRNPRHQH. Residues 1–20 are disordered; it reads MVPYRNPRHQHVASVLRSGG.

Functionally, involved in the transcriptional regulation of pufB. This is Transcriptional regulatory protein PufK (pufK) from Cereibacter sphaeroides (strain ATCC 17023 / DSM 158 / JCM 6121 / CCUG 31486 / LMG 2827 / NBRC 12203 / NCIMB 8253 / ATH 2.4.1.) (Rhodobacter sphaeroides).